The primary structure comprises 65 residues: Large ribosomal subunit protein bL35 (65 aa).

The protein belongs to the bacterial ribosomal protein bL35 family.

This chain is Large ribosomal subunit protein bL35, found in Heliobacterium modesticaldum (strain ATCC 51547 / Ice1).